The following is a 187-amino-acid chain: Ubiquinone biosynthesis protein COQ4 homolog, mitochondrial (187 aa).

4 residues coordinate Zn(2+): histidine 77, aspartate 78, histidine 81, and glutamate 93.

It belongs to the COQ4 family. As to quaternary structure, component of a multi-subunit COQ enzyme complex. Zn(2+) is required as a cofactor.

It is found in the mitochondrion inner membrane. It catalyses the reaction a 4-hydroxy-3-methoxy-5-(all-trans-polyprenyl)benzoate + H(+) = a 2-methoxy-6-(all-trans-polyprenyl)phenol + CO2. It functions in the pathway cofactor biosynthesis; ubiquinone biosynthesis. Lyase that catalyzes the C1-decarboxylation of 4-hydroxy-3-methoxy-5-(all-trans-polyprenyl)benzoic acid into 2-methoxy-6-(all-trans-polyprenyl)phenol during ubiquinone biosynthesis. The polypeptide is Ubiquinone biosynthesis protein COQ4 homolog, mitochondrial (Leishmania major).